Here is a 23-residue protein sequence, read N- to C-terminus: U22-ctenitoxin-Co1a (23 aa).

Expressed by the venom gland.

The protein localises to the secreted. The chain is U22-ctenitoxin-Co1a from Ctenus ornatus (Brazilian spider).